Reading from the N-terminus, the 197-residue chain is Glycerol-3-phosphate acyltransferase (197 aa).

A run of 5 helical transmembrane segments spans residues 5-25, 54-74, 80-100, 112-132, and 153-173; these read IYIAALLLGYLFGSIPFGLIL, GLAAATLLLDALKGTAAVIIA, AEAAMLAALGAFLGHLFPVWL, IGVLIGLFWPGAIVFCLLWLA, and IFLWWFGHPALASLFAVLTLL.

Belongs to the PlsY family. As to quaternary structure, probably interacts with PlsX.

The protein resides in the cell inner membrane. The enzyme catalyses an acyl phosphate + sn-glycerol 3-phosphate = a 1-acyl-sn-glycero-3-phosphate + phosphate. It functions in the pathway lipid metabolism; phospholipid metabolism. Functionally, catalyzes the transfer of an acyl group from acyl-phosphate (acyl-PO(4)) to glycerol-3-phosphate (G3P) to form lysophosphatidic acid (LPA). This enzyme utilizes acyl-phosphate as fatty acyl donor, but not acyl-CoA or acyl-ACP. The protein is Glycerol-3-phosphate acyltransferase of Rhodopseudomonas palustris (strain HaA2).